Reading from the N-terminus, the 94-residue chain is Pyrimidine/purine nucleoside phosphorylase (94 aa).

This sequence belongs to the nucleoside phosphorylase PpnP family.

It carries out the reaction a purine D-ribonucleoside + phosphate = a purine nucleobase + alpha-D-ribose 1-phosphate. The enzyme catalyses adenosine + phosphate = alpha-D-ribose 1-phosphate + adenine. The catalysed reaction is cytidine + phosphate = cytosine + alpha-D-ribose 1-phosphate. It catalyses the reaction guanosine + phosphate = alpha-D-ribose 1-phosphate + guanine. It carries out the reaction inosine + phosphate = alpha-D-ribose 1-phosphate + hypoxanthine. The enzyme catalyses thymidine + phosphate = 2-deoxy-alpha-D-ribose 1-phosphate + thymine. The catalysed reaction is uridine + phosphate = alpha-D-ribose 1-phosphate + uracil. It catalyses the reaction xanthosine + phosphate = alpha-D-ribose 1-phosphate + xanthine. In terms of biological role, catalyzes the phosphorolysis of diverse nucleosides, yielding D-ribose 1-phosphate and the respective free bases. Can use uridine, adenosine, guanosine, cytidine, thymidine, inosine and xanthosine as substrates. Also catalyzes the reverse reactions. In Pseudomonas fluorescens (strain ATCC BAA-477 / NRRL B-23932 / Pf-5), this protein is Pyrimidine/purine nucleoside phosphorylase.